The primary structure comprises 92 residues: Small ribosomal subunit protein uS19c (92 aa).

This sequence belongs to the universal ribosomal protein uS19 family.

Its subcellular location is the plastid. It localises to the chloroplast. Its function is as follows. Protein S19 forms a complex with S13 that binds strongly to the 16S ribosomal RNA. In Amborella trichopoda, this protein is Small ribosomal subunit protein uS19c.